We begin with the raw amino-acid sequence, 134 residues long: Profilin-2 (134 aa).

A disulfide bridge connects residues Cys-13 and Cys-118. The short motif at 84 to 100 (AVIRGKKGSGGITIKKT) is the Involved in PIP2 interaction element. At Thr-114 the chain carries Phosphothreonine.

It belongs to the profilin family. As to quaternary structure, occurs in many kinds of cells as a complex with monomeric actin in a 1:1 ratio. In terms of processing, phosphorylated by MAP kinases.

The protein resides in the cytoplasm. It is found in the cytoskeleton. Functionally, binds to actin and affects the structure of the cytoskeleton. At high concentrations, profilin prevents the polymerization of actin, whereas it enhances it at low concentrations. In Olea europaea (Common olive), this protein is Profilin-2.